A 286-amino-acid chain; its full sequence is 2-dehydro-3-deoxyphosphooctonate aldolase (286 aa).

Belongs to the KdsA family.

The protein resides in the cytoplasm. It catalyses the reaction D-arabinose 5-phosphate + phosphoenolpyruvate + H2O = 3-deoxy-alpha-D-manno-2-octulosonate-8-phosphate + phosphate. Its pathway is carbohydrate biosynthesis; 3-deoxy-D-manno-octulosonate biosynthesis; 3-deoxy-D-manno-octulosonate from D-ribulose 5-phosphate: step 2/3. It participates in bacterial outer membrane biogenesis; lipopolysaccharide biosynthesis. This chain is 2-dehydro-3-deoxyphosphooctonate aldolase, found in Bradyrhizobium sp. (strain BTAi1 / ATCC BAA-1182).